An 82-amino-acid polypeptide reads, in one-letter code: Vejovine (82 aa).

A signal peptide spans 1–22; it reads MNAKTLFVVFLIGMLVTEQVEA. A propeptide spanning residues 70–82 is cleaved from the precursor; that stretch reads MTLDEIVDAMYYD.

The protein belongs to the non-disulfide-bridged peptide (NDBP) superfamily. Long chain multifunctional peptide (group 2) family. In terms of tissue distribution, expressed by the venom gland.

Its subcellular location is the secreted. The protein localises to the target cell membrane. Its function is as follows. Displays significant potent antimicrobial activity against clinical isolates of Gram-negative multidrug resistant strains of E.coli, P.aeruginosa and A.baumanii with MIC values as low as 4.4 uM. Additionally, it displays low cytolytic and hemolytic activity against human erythrocytes reaching 50% hemolysis at 100 uM. The protein is Vejovine of Vaejovis mexicanus (Mexican scorpion).